We begin with the raw amino-acid sequence, 240 residues long: Purine nucleoside phosphorylase RP494 (240 aa).

Residues H60, C96, and H113 each contribute to the Zn(2+) site.

This sequence belongs to the purine nucleoside phosphorylase YfiH/LACC1 family. Homodimer. Cu(2+) serves as cofactor. The cofactor is Zn(2+).

It catalyses the reaction adenosine + phosphate = alpha-D-ribose 1-phosphate + adenine. The catalysed reaction is S-methyl-5'-thioadenosine + phosphate = 5-(methylsulfanyl)-alpha-D-ribose 1-phosphate + adenine. The enzyme catalyses inosine + phosphate = alpha-D-ribose 1-phosphate + hypoxanthine. It carries out the reaction adenosine + H2O + H(+) = inosine + NH4(+). Purine nucleoside enzyme that catalyzes the phosphorolysis of adenosine and inosine nucleosides, yielding D-ribose 1-phosphate and the respective free bases, adenine and hypoxanthine. Also catalyzes the phosphorolysis of S-methyl-5'-thioadenosine into adenine and S-methyl-5-thio-alpha-D-ribose 1-phosphate. Also has adenosine deaminase activity. In Rickettsia prowazekii (strain Madrid E), this protein is Purine nucleoside phosphorylase RP494.